The following is a 233-amino-acid chain: Adenosine 5'-phosphosulfate reductase (233 aa).

[4Fe-4S] cluster-binding residues include cysteine 120, cysteine 121, cysteine 203, and cysteine 206. Residue cysteine 229 is the Nucleophile; cysteine thiosulfonate intermediate of the active site.

It belongs to the PAPS reductase family. CysH subfamily. [4Fe-4S] cluster is required as a cofactor.

The protein resides in the cytoplasm. The enzyme catalyses [thioredoxin]-disulfide + sulfite + AMP + 2 H(+) = adenosine 5'-phosphosulfate + [thioredoxin]-dithiol. The protein operates within sulfur metabolism; hydrogen sulfide biosynthesis; sulfite from sulfate. Its function is as follows. Catalyzes the formation of sulfite from adenosine 5'-phosphosulfate (APS) using thioredoxin as an electron donor. The chain is Adenosine 5'-phosphosulfate reductase from Lysinibacillus sphaericus (strain C3-41).